We begin with the raw amino-acid sequence, 108 residues long: TYRO protein tyrosine kinase-binding protein (108 aa).

The N-terminal stretch at 1 to 25 (MGRLGPSNGLLPLLLAVGGFSLVQA) is a signal peptide. The Extracellular portion of the chain corresponds to 26-36 (QRECSCSAVSP). The chain crosses the membrane as a helical span at residues 37–57 (GILAGIVLGDLVLTLLIALAV). A Ca(2+)-binding site is contributed by D46. Over 58–108 (YSLGRLVPRTRGAVDVTRKQHIAETESAYQELQGQRSDVYSDLNTQRQYYK) the chain is Cytoplasmic. In terms of domain architecture, ITAM spans 75-103 (RKQHIAETESAYQELQGQRSDVYSDLNTQ). A phosphotyrosine mark is found at Y86 and Y97.

The protein belongs to the TYROBP family. Homodimer; disulfide-linked. Homotrimer; disulfide-linked. Homotetramer; disulfide-linked. Homotrimers and homotetramers form when low levels of partner receptors are available and is competitive with assembly with interacting receptors. They may represent alternative oligomerization states or may be intermediates in the receptor assembly process. Binding of a metal cation aids in homooligomerization through coordination of the metal ion by the subunits of the oligomer. Interacts with TREM1. Interacts with TREM2. Interacts with CLECSF5. Interacts with CD300LB and CD300C2. Interacts with CD300E. Interacts (via ITAM domain) with SYK (via SH2 domains); activates SYK mediating neutrophils and macrophages integrin-mediated activation. Interacts with KLRC2. Interacts with CD300H. Interacts with KLRD1. Interacts with SIGLEC1. Following ligand binding by associated receptors, tyrosine phosphorylated in the ITAM domain which leads to activation of additional tyrosine kinases and subsequent cell activation. In terms of tissue distribution, highly expressed in spleen, liver and thymus. Weakly expressed in lymph nodes. Expressed in peripheral blood leukocytes, granulocytes, macrophages, and monocytes. LPS does not increase expression in granulocytes.

It localises to the cell membrane. In terms of biological role, adapter protein which non-covalently associates with activating receptors found on the surface of a variety of immune cells to mediate signaling and cell activation following ligand binding by the receptors. TYROBP is tyrosine-phosphorylated in the ITAM domain following ligand binding by the associated receptors which leads to activation of additional tyrosine kinases and subsequent cell activation. Also has an inhibitory role in some cells. Non-covalently associates with activating receptors of the CD300 family to mediate cell activation. Also mediates cell activation through association with activating receptors of the CD200R family. Required for neutrophil activation mediated by integrin. Required for the activation of myeloid cells mediated by the CLEC5A/MDL1 receptor. Associates with natural killer (NK) cell receptors such as the KLRD1/KLRC2 heterodimer to mediate NK cell activation. Associates with TREM1 to mediate activation of neutrophils and monocytes. Associates with TREM2 on monocyte-derived dendritic cells to mediate up-regulation of chemokine receptor CCR7 and dendritic cell maturation and survival. Association with TREM2 mediates cytokine-induced formation of multinucleated giant cells which are formed by the fusion of macrophages. Stabilizes the TREM2 C-terminal fragment (TREM2-CTF) produced by TREM2 ectodomain shedding which suppresses the release of pro-inflammatory cytokines. In microglia, required with TREM2 for phagocytosis of apoptotic neurons. Required with ITGAM/CD11B in microglia to control production of microglial superoxide ions which promote the neuronal apoptosis that occurs during brain development. Promotes pro-inflammatory responses in microglia following nerve injury which accelerates degeneration of injured neurons. Positively regulates the expression of the IRAK3/IRAK-M kinase and IL10 production by liver dendritic cells and inhibits their T cell allosimulatory ability. Negatively regulates B cell proliferation. Required for CSF1-mediated osteoclast cytoskeletal organization. Positively regulates multinucleation during osteoclast development. This chain is TYRO protein tyrosine kinase-binding protein, found in Sus scrofa (Pig).